Reading from the N-terminus, the 145-residue chain is Large ribosomal subunit protein uL11 (145 aa).

Belongs to the universal ribosomal protein uL11 family. As to quaternary structure, part of the ribosomal stalk of the 50S ribosomal subunit. Interacts with L10 and the large rRNA to form the base of the stalk. L10 forms an elongated spine to which L12 dimers bind in a sequential fashion forming a multimeric L10(L12)X complex. Post-translationally, one or more lysine residues are methylated.

Its function is as follows. Forms part of the ribosomal stalk which helps the ribosome interact with GTP-bound translation factors. The chain is Large ribosomal subunit protein uL11 from Rickettsia felis (strain ATCC VR-1525 / URRWXCal2) (Rickettsia azadi).